Consider the following 98-residue polypeptide: NADH-ubiquinone oxidoreductase chain 4L (98 aa).

The next 3 membrane-spanning stretches (helical) occupy residues 1–21 (MSLIHINIFLAFTVSLMGLLM), 29–49 (SLLCLEGMMLSLFIMATMMVL), and 61–81 (IILLVFAACEAALGLSLLVMI).

The protein belongs to the complex I subunit 4L family. In terms of assembly, core subunit of respiratory chain NADH dehydrogenase (Complex I) which is composed of 45 different subunits.

The protein resides in the mitochondrion inner membrane. It catalyses the reaction a ubiquinone + NADH + 5 H(+)(in) = a ubiquinol + NAD(+) + 4 H(+)(out). Functionally, core subunit of the mitochondrial membrane respiratory chain NADH dehydrogenase (Complex I) which catalyzes electron transfer from NADH through the respiratory chain, using ubiquinone as an electron acceptor. Part of the enzyme membrane arm which is embedded in the lipid bilayer and involved in proton translocation. This chain is NADH-ubiquinone oxidoreductase chain 4L (MT-ND4L), found in Rhinoceros unicornis (Greater Indian rhinoceros).